The chain runs to 535 residues: Cytochrome P450 monooxygenase claQ (535 aa).

2 helical membrane-spanning segments follow: residues 7–27 and 225–245; these read IGTW…KLVG and YFAI…NLPT. Cys472 contributes to the heme binding site.

It belongs to the cytochrome P450 family. Heme serves as cofactor.

It localises to the membrane. It functions in the pathway secondary metabolite biosynthesis; terpenoid biosynthesis. Its function is as follows. Cytochrome P450 monooxygenase; part of the gene cluster that mediates the biosynthesis of clavilactone A, a meroterpenoid that features a unique benzo-fused ten-membered carbocyclic ring unit with an alpha,beta-epoxy-gamma-lactone moiety, forming an intriguing 10/5/3 tricyclic nested skeleton. Cytochrome P450 monooxygenases claO, claP, claQ, claU, and claW are close orthologs, suggesting that a redundant function or pseudogenes are present in the cla cluster. These monoxygenases are not involved in clavilactone A biosynthesis nor its modification. ClaR, ClaS and ClaT are sufficient to produce clavilactone A. The biosynthesis begins with the prenyltransferase claS that transfers geranyl pyrophosphate (GPP) to hydroquinone to produces geranylhydroquinone. The cytochrome P450 monooxygenase claR then catalyzes the diradical coupling reaction between the intramolecular hydroquinone and allyl moieties to form the benzo-fused ten-membered carbocyclic ring unit of wigantol. Finally the cytochrome P450 monooxygenase claT exquisitely and stereoselectively assembles the alpha,beta-epoxy-gamma-lactone moiety, producing clavilactone A via arnebinol A. This chain is Cytochrome P450 monooxygenase claQ, found in Ampulloclitocybe clavipes (Club foot).